Reading from the N-terminus, the 389-residue chain is Equilibrative nucleotide transporter 8 (389 aa).

10 helical membrane-spanning segments follow: residues 19–39 (VAYV…NALI), 57–77 (TFTV…MTWN), 87–107 (NLGF…DWVW), 119–139 (LMVG…GSLI), 150–170 (MQAI…LRIA), 187–207 (HSYF…CNVL), 238–258 (WPAS…PGFI), 266–286 (LLQS…DFVG), 331–351 (VVVL…VLMI), and 367–387 (IFMV…GWLW).

This sequence belongs to the SLC29A/ENT transporter (TC 2.A.57) family. As to expression, expressed in stems, flowers and siliques.

It is found in the cell membrane. Functionally, may be involved in nucleoside transport. This is Equilibrative nucleotide transporter 8 (ETN8) from Arabidopsis thaliana (Mouse-ear cress).